Reading from the N-terminus, the 70-residue chain is Guanine nucleotide-binding protein G(I)/G(S)/G(O) subunit gamma-8 (70 aa).

Cys-67 carries the cysteine methyl ester modification. Cys-67 carries the S-geranylgeranyl cysteine lipid modification. Positions 68 to 70 are cleaved as a propeptide — removed in mature form; that stretch reads TLL.

This sequence belongs to the G protein gamma family. In terms of assembly, g proteins are composed of 3 units, alpha, beta and gamma. In terms of tissue distribution, detected in the olfactory epithelium, the vomeronasal epithelium and, to a lesser extent, the olfactory bulb.

It is found in the cell membrane. In terms of biological role, guanine nucleotide-binding proteins (G proteins) are involved as a modulator or transducer in various transmembrane signaling systems. The beta and gamma chains are required for the GTPase activity, for replacement of GDP by GTP, and for G protein-effector interaction. This subunit may have a very specific role in the development and turnover of olfactory and vomeronasal neurons. The sequence is that of Guanine nucleotide-binding protein G(I)/G(S)/G(O) subunit gamma-8 (Gng8) from Rattus norvegicus (Rat).